Consider the following 322-residue polypeptide: Cyclin mcs2 (322 aa).

Position 310 is a phosphoserine (Ser-310).

This sequence belongs to the cyclin family. Cyclin C subfamily. In terms of assembly, one of the nine subunits forming the core-TFIIH basal transcription factor. Interacts with crk1 and skp1.

The protein localises to the nucleus. Essential for progression through the cell cycle. Possesses kinase activity that can be detected when myelin basic protein (MBP) is provided as an exogenous substrate. This Schizosaccharomyces pombe (strain 972 / ATCC 24843) (Fission yeast) protein is Cyclin mcs2 (mcs2).